Reading from the N-terminus, the 608-residue chain is Glutamine--fructose-6-phosphate aminotransferase [isomerizing] (608 aa).

Cysteine 2 (nucleophile; for GATase activity) is an active-site residue. In terms of domain architecture, Glutamine amidotransferase type-2 spans 2–217 (CGIVGILGRE…DGDWVVLTRN (216 aa)). SIS domains lie at 284-423 (LPFD…ARGE) and 456-598 (LARE…VDQP). Lysine 603 functions as the For Fru-6P isomerization activity in the catalytic mechanism.

As to quaternary structure, homodimer.

The protein resides in the cytoplasm. It catalyses the reaction D-fructose 6-phosphate + L-glutamine = D-glucosamine 6-phosphate + L-glutamate. Functionally, catalyzes the first step in hexosamine metabolism, converting fructose-6P into glucosamine-6P using glutamine as a nitrogen source. This is Glutamine--fructose-6-phosphate aminotransferase [isomerizing] (glmS) from Bradyrhizobium diazoefficiens (strain JCM 10833 / BCRC 13528 / IAM 13628 / NBRC 14792 / USDA 110).